Here is a 380-residue protein sequence, read N- to C-terminus: Histidinol-phosphate aminotransferase (380 aa).

K232 is modified (N6-(pyridoxal phosphate)lysine).

The protein belongs to the class-II pyridoxal-phosphate-dependent aminotransferase family. Histidinol-phosphate aminotransferase subfamily. Homodimer. Requires pyridoxal 5'-phosphate as cofactor.

It carries out the reaction L-histidinol phosphate + 2-oxoglutarate = 3-(imidazol-4-yl)-2-oxopropyl phosphate + L-glutamate. Its pathway is amino-acid biosynthesis; L-histidine biosynthesis; L-histidine from 5-phospho-alpha-D-ribose 1-diphosphate: step 7/9. In Mycobacterium bovis (strain BCG / Pasteur 1173P2), this protein is Histidinol-phosphate aminotransferase.